A 216-amino-acid polypeptide reads, in one-letter code: 3-keto-L-gulonate-6-phosphate decarboxylase UlaD (216 aa).

Asp11 contributes to the substrate binding site. Mg(2+)-binding residues include Glu33 and Asp62. Arg192 is a binding site for substrate.

It belongs to the HPS/KGPDC family. KGPDC subfamily. Homodimer. Mg(2+) serves as cofactor.

The catalysed reaction is 3-dehydro-L-gulonate 6-phosphate + H(+) = L-xylulose 5-phosphate + CO2. It participates in cofactor degradation; L-ascorbate degradation; D-xylulose 5-phosphate from L-ascorbate: step 2/4. Its function is as follows. Catalyzes the decarboxylation of 3-keto-L-gulonate-6-P into L-xylulose-5-P. Is involved in the anaerobic L-ascorbate utilization. The polypeptide is 3-keto-L-gulonate-6-phosphate decarboxylase UlaD (Escherichia coli O139:H28 (strain E24377A / ETEC)).